A 137-amino-acid polypeptide reads, in one-letter code: uncharacterized protein (137 aa).

This sequence belongs to the ycf72 family.

It is found in the plastid. It localises to the chloroplast. This is an uncharacterized protein from Saccharum hybrid (Sugarcane).